The sequence spans 431 residues: MVSLEKNDHLMLARQLPLKSVALILAGGRGTRLKDLTNKRAKPAVHFGGKFRIIDFALSNCINSGIRRMGVITQYQSHTLVQHIQRGWSFFNEEMNEFVDLLPAQQRMKGENWYRGTADAVTQNLDIIRRYKAEYVVILAGDHIYKQDYSRMLIDHVEKGARCTVACMPVPIEEASAFGVMAVDENDKIIEFVEKPANPPSMPNDPSKSLASMGIYVFDADYLYELLEEDDRDENSSHDFGKDLIPKITEAGLAYAHPFPLSCVQSDPDAEPYWRDVGTLEAYWKANLDLASVVPELDMYDRNWPIRTYNESLPPAKFVQDRSGSHGMTLNSLVSGGCVISGSVVVQSVLFSRVRVNSFCNIDSAVLLPEVWVGRSCRLRRCVIDRACVIPEGMVIGENAEEDARRFYRSEEGIVLVTREMLRKLGHKQER.

Beta-D-fructose 1,6-bisphosphate is bound at residue lysine 39. AMP-binding residues include arginine 40, histidine 46, and arginine 52. Tyrosine 114 provides a ligand contact to alpha-D-glucose 1-phosphate. Arginine 130 contributes to the AMP binding site. Alpha-D-glucose 1-phosphate contacts are provided by residues glycine 179, glutamate 194 to lysine 195, and serine 212. 2 residues coordinate AMP: glutamate 370 and arginine 386. Beta-D-fructose 1,6-bisphosphate contacts are provided by residues arginine 419–arginine 423 and glutamine 429–arginine 431.

This sequence belongs to the bacterial/plant glucose-1-phosphate adenylyltransferase family. As to quaternary structure, homotetramer.

It catalyses the reaction alpha-D-glucose 1-phosphate + ATP + H(+) = ADP-alpha-D-glucose + diphosphate. It participates in glycan biosynthesis; glycogen biosynthesis. With respect to regulation, allosterically activated by fructose-1,6-bisphosphate (F16BP) and inhibited by AMP. In terms of biological role, involved in the biosynthesis of ADP-glucose, a building block required for the elongation reactions to produce glycogen. Catalyzes the reaction between ATP and alpha-D-glucose 1-phosphate (G1P) to produce pyrophosphate and ADP-Glc. This Shigella dysenteriae serotype 1 (strain Sd197) protein is Glucose-1-phosphate adenylyltransferase.